The sequence spans 481 residues: Small ribosomal subunit protein bS1 (481 aa).

S1 motif domains are found at residues 36-105, 123-188, 209-277, and 294-363; these read GDIV…LSKK, DEAV…LSRR, GTIR…LSLK, and GQIV…LSLK. The tract at residues 429-467 is disordered; it reads TAQMEKFAAAEAAGRGADDQSSASSAPSEKTAGGSLASD. A compositionally biased stretch (low complexity) spans 437-456; the sequence is AAEAAGRGADDQSSASSAPS.

Belongs to the bacterial ribosomal protein bS1 family.

In terms of biological role, binds mRNA; thus facilitating recognition of the initiation point. It is needed to translate mRNA with a short Shine-Dalgarno (SD) purine-rich sequence. In Mycobacterium tuberculosis (strain CDC 1551 / Oshkosh), this protein is Small ribosomal subunit protein bS1 (rpsA).